A 209-amino-acid chain; its full sequence is PRA1 family protein B1 (209 aa).

Ala-2 is modified (N-acetylalanine). Helical transmembrane passes span 73 to 93 (LAYF…FSLF), 95 to 115 (HPLS…LYLF), 133 to 153 (ETLL…SVGS), 154 to 174 (LLTS…AFVV), and 185 to 205 (PANA…AAAV).

It belongs to the PRA1 family. In terms of assembly, can form homodimer. Interacts with PRA1B2, PRA1B3, PRA1B4, PRA1B5, PRA1B6 and PRA1E.

The protein resides in the endosome membrane. In terms of biological role, may be involved in both secretory and endocytic intracellular trafficking in the endosomal/prevacuolar compartments. The polypeptide is PRA1 family protein B1 (PRA1B1) (Arabidopsis thaliana (Mouse-ear cress)).